Reading from the N-terminus, the 503-residue chain is MKNRLNVLLFLLILSTGLYLTRSFWQGWIVGAFSVLITITVVFIGIVIFLENRHPTKTLTWLMVLAVFPVVGFIFYLMFGQNHRKSKTFMKKALSDEEAFEKIEGNRQLNEEQLQKMGGHQQLLFRLAHRLANNPISFSTNTKVLTDGKETFAHIKQALRMATHHIHLEYYIVRDDEIGQEIKEILMQKAKEGIHVRFLYDGVGSWKLSKSYIQDLKQAGVEIVPFAPVKLPFINHTINYRNHRKIIVIDGTVGFVGGLNIGDEYLGKDPYFGFWRDTHLYVRGEAVRTLQLIFLRDWAHETGETILKPSYLSPALTNMKDDGGVQMIASGPDTRWEINKKLFFSMITSAKKSIWITSPYFIPDEDILSALKIAALSGIDVRILVPNRPDKRIVFHASRSYFPELLEAGVKVYEYTRGFLHSKIIIVDNEIASIGTSNMDMRSFHLNFEVNAFLYRTKSVTTLVSDFVYDLEHTNQIRFEQFRNRAWYYRVLESTCRLLSPLL.

3 helical membrane passes run L5–W25, I29–F49, and L59–F79. PLD phosphodiesterase domains lie at I238 to Y265 and T416 to S443. Residues H243, K245, D250, H421, K423, and D428 contribute to the active site.

The protein belongs to the phospholipase D family. Cardiolipin synthase subfamily.

The protein resides in the cell membrane. It catalyses the reaction 2 a 1,2-diacyl-sn-glycero-3-phospho-(1'-sn-glycerol) = a cardiolipin + glycerol. Its function is as follows. Catalyzes the reversible phosphatidyl group transfer from one phosphatidylglycerol molecule to another to form cardiolipin (CL) (diphosphatidylglycerol) and glycerol. The polypeptide is Cardiolipin synthase (cls) (Halalkalibacterium halodurans (strain ATCC BAA-125 / DSM 18197 / FERM 7344 / JCM 9153 / C-125) (Bacillus halodurans)).